The sequence spans 630 residues: MSRSGDRTSTFDPSHSDNLLHGLNLLWRKQLFCDVTLTAQGQQFHCHKAVLASCSQYFRSLFSSHPPLGGGVGGQDGLGAPKDQQQQQQPQQQPPQQQQPPPQEEPGTPSSSPDDKLLTSPRAINNLVLQGCSSIGLRLVLEYLYTANVTLSLDTVEEVLSVSKILHIPQVTKLCVQFLNDQISVQNYKQVCKIAALHGLEETKKLANKYLVEDVLLLNFEEMRALLDSLPPPVESELALFQMSVLWLEHDRETRMQYAPDLMKRLRFALIPAPELVERVQSVDFMRTDPVCQKLLLDAMNYHLMPFRQHCRQSLASRIRSNKKMLLLVGGLPPGPDRLPSNLVQYYDDEKKTWKILTIMPYNSAHHCVVEVENFLFVLGGEDQWNPNGKHSTNFVSRYDPRFNSWIQLPPMQERRASFYACRLDKHLYVIGGRNETGYLSSVECYNLDTNEWRYVSSLPQPLAAHAGAVHNGKIYISGGVHNGEYVPWLYCYDPVMDVWARKQDMNTKRAIHTLAVMNDRLYAIGGNHLKGFSHLDVMLVECYDPKGDQWNILQTPILEGRSGPGCAVLDDSIYLVGGYSWSMGAYKSSTICYCPEKGTWTELEGDVAEPLAGPACATVILPACVPYNK.

In terms of domain architecture, BTB spans 33–153; that stretch reads CDVTLTAQGQ…LYTANVTLSL (121 aa). The tract at residues 69–117 is disordered; sequence GGGVGGQDGLGAPKDQQQQQQPQQQPPQQQQPPPQEEPGTPSSSPDDKL. A compositionally biased stretch (low complexity) spans 84 to 96; sequence QQQQQQPQQQPPQ. The BACK domain maps to 212–281; sequence VEDVLLLNFE…PAPELVERVQ (70 aa). 6 Kelch repeats span residues 325 to 374, 375 to 426, 427 to 473, 475 to 520, 522 to 572, and 574 to 622; these read MLLL…EVEN, FLFV…RLDK, HLYV…VHNG, IYIS…VMND, LYAI…VLDD, and IYLV…TVIL.

Interacts with TOR1A. In terms of tissue distribution, expressed in the brain, primarily in neurons. In the cerebral cortex, mostly expressed in layers I and II (at protein level). Also observed in some neurons of the corpus striatum (at protein level). Expressed at high levels in the hippocampus, including in pyramidal cells of the CA1 and CA3 layers (at protein level). In the cerebellum, expression in Purkinje cells is higher than in granular cells (at protein level). Also detected in the medial septum, ventral pallidum, thalamus, hypothalamus, amygdala, inferior colliculi, locus caeruleus, peripyramidal nucleus, raphe nucleus, reticular formation, spinal trigeminal nucleus, and vestibular nuclei (at protein level). Low expression, if any, in glial cells (at protein level). Not observed in the corpus callosum.

Its subcellular location is the cytoplasm. It is found in the cytosol. The protein localises to the endoplasmic reticulum membrane. This chain is Kelch-like protein 14 (Klhl14), found in Mus musculus (Mouse).